Consider the following 148-residue polypeptide: Angiogenin-1 (148 aa).

Positions 1-23 (MVMVLSPLLLVFILGLGLTPVAP) are cleaved as a signal peptide. Residue His-37 is the Proton acceptor of the active site. Residue Arg-45 participates in tRNA binding. Cystine bridges form between Cys-50–Cys-105, Cys-63–Cys-116, and Cys-81–Cys-131. Positions 55–59 (KNRRL) match the Nucleolar localization signal motif. Residues Cys-105 and Ile-127 each contribute to the tRNA site. The active-site Proton donor is the His-138.

This sequence belongs to the pancreatic ribonuclease family. As to quaternary structure, homodimer. Interacts with RNH1; inhibiting ANG ribonuclease activity. Serum and milk.

It localises to the secreted. The protein localises to the nucleus. Its subcellular location is the nucleolus. The protein resides in the cytoplasm. It is found in the stress granule. Functionally, secreted ribonuclease that can either promote or restrict cell proliferation of target cells, depending on the context. Endocytosed in target cells via its receptor PLXNB2 and translocates to the cytoplasm or nucleus. Under stress conditions, localizes to the cytoplasm and promotes the assembly of stress granules (SGs): specifically cleaves a subset of tRNAs within anticodon loops to produce tRNA-derived stress-induced fragments (tiRNAs), resulting in translation repression and inhibition of cell proliferation. tiRNas also prevent formation of apoptosome, thereby promoting cell survival. Preferentially cleaves RNAs between a pyrimidine and an adenosine residue, suggesting that it cleaves the anticodon loop of tRNA(Ala) (32-UUAGCAU-38) after positions 33 and 36. Cleaves a subset of tRNAs, including tRNA(Ala), tRNA(Glu), tRNA(Gly), tRNA(Lys), tRNA(Val), tRNA(His), tRNA(Asp) and tRNA(Sec). Under growth conditions and in differentiated cells, translocates to the nucleus and stimulates ribosomal RNA (rRNA) transcription, including that containing the initiation site sequences of 45S rRNA, thereby promoting cell growth and proliferation. Angiogenin induces vascularization of normal and malignant tissues via its ability to promote rRNA transcription. This is Angiogenin-1 (ANG1) from Bos taurus (Bovine).